Reading from the N-terminus, the 345-residue chain is MRVADFSFDLPDELIARYPMAQRNASRLLTLDGNSGALGDKQFTDLLEMINPGDLMVFNNTRVIPARMFGQKASGGKLEILVERMLDDKRILAHVRSSKSPKVDSLIHLDGGYQMKMVARHDTLFELELLSELTILEVLEAVGHMPLPPYIDRPDEDADKERYQTVYNQNPGAVAAPTAGLHFDDAMLDALKAKGVNIAFVTLHVGAGTFQPVRVDTIVEHKMHSEWANVPQDVVDLIAQTKAAGKRVVAVGTTSVRSLESAARASLGELKAFSGDTDIFIYPGYQFQVVDAMVTNFHLPESTLIMLVSAFAGFDHVMAAYQHAITQKYRFFSYGDAMFVTKKAH.

Belongs to the QueA family. As to quaternary structure, monomer.

The protein resides in the cytoplasm. The enzyme catalyses 7-aminomethyl-7-carbaguanosine(34) in tRNA + S-adenosyl-L-methionine = epoxyqueuosine(34) in tRNA + adenine + L-methionine + 2 H(+). Its pathway is tRNA modification; tRNA-queuosine biosynthesis. Its function is as follows. Transfers and isomerizes the ribose moiety from AdoMet to the 7-aminomethyl group of 7-deazaguanine (preQ1-tRNA) to give epoxyqueuosine (oQ-tRNA). The sequence is that of S-adenosylmethionine:tRNA ribosyltransferase-isomerase from Shewanella sp. (strain W3-18-1).